Here is a 174-residue protein sequence, read N- to C-terminus: Mitochondrial holo-[acyl-carrier-protein] synthase (174 aa).

This sequence belongs to the P-Pant transferase superfamily. AcpS family.

The protein localises to the mitochondrion. It carries out the reaction apo-[ACP] + CoA = holo-[ACP] + adenosine 3',5'-bisphosphate + H(+). Its function is as follows. Transfers the 4'-phosphopantetheine moiety from coenzyme A to a Ser of mitochondrial acyl-carrier-protein. This is Mitochondrial holo-[acyl-carrier-protein] synthase (PPT2) from Eremothecium gossypii (strain ATCC 10895 / CBS 109.51 / FGSC 9923 / NRRL Y-1056) (Yeast).